The sequence spans 128 residues: Holo-[acyl-carrier-protein] synthase (128 aa).

Aspartate 8 and glutamate 59 together coordinate Mg(2+).

It belongs to the P-Pant transferase superfamily. AcpS family. Requires Mg(2+) as cofactor.

The protein resides in the cytoplasm. It catalyses the reaction apo-[ACP] + CoA = holo-[ACP] + adenosine 3',5'-bisphosphate + H(+). In terms of biological role, transfers the 4'-phosphopantetheine moiety from coenzyme A to a Ser of acyl-carrier-protein. The sequence is that of Holo-[acyl-carrier-protein] synthase from Rickettsia typhi (strain ATCC VR-144 / Wilmington).